Reading from the N-terminus, the 230-residue chain is CASP-like protein 2A2 (230 aa).

The tract at residues methionine 1–valine 23 is disordered. The Cytoplasmic segment spans residues methionine 1 to threonine 29. Residues alanine 30–leucine 50 form a helical membrane-spanning segment. Over lysine 51 to tyrosine 71 the chain is Extracellular. A helical membrane pass occupies residues leucine 72 to methionine 92. The Cytoplasmic segment spans residues proline 93–glutamine 100. The helical transmembrane segment at alanine 101–valine 121 threads the bilayer. Over serine 122–lysine 151 the chain is Extracellular. A helical membrane pass occupies residues alanine 152–valine 172. Residues serine 173–asparagine 230 are Cytoplasmic-facing.

This sequence belongs to the Casparian strip membrane proteins (CASP) family. As to quaternary structure, homodimer and heterodimers.

Its subcellular location is the cell membrane. In Populus trichocarpa (Western balsam poplar), this protein is CASP-like protein 2A2.